The sequence spans 247 residues: Aspartate/glutamate leucyltransferase (247 aa).

It belongs to the R-transferase family. Bpt subfamily.

Its subcellular location is the cytoplasm. It catalyses the reaction N-terminal L-glutamyl-[protein] + L-leucyl-tRNA(Leu) = N-terminal L-leucyl-L-glutamyl-[protein] + tRNA(Leu) + H(+). The catalysed reaction is N-terminal L-aspartyl-[protein] + L-leucyl-tRNA(Leu) = N-terminal L-leucyl-L-aspartyl-[protein] + tRNA(Leu) + H(+). Its function is as follows. Functions in the N-end rule pathway of protein degradation where it conjugates Leu from its aminoacyl-tRNA to the N-termini of proteins containing an N-terminal aspartate or glutamate. The chain is Aspartate/glutamate leucyltransferase from Dechloromonas aromatica (strain RCB).